The chain runs to 384 residues: Putative 8-amino-7-oxononanoate synthase (384 aa).

Position 19 (Arg-19) interacts with substrate. Residue 106 to 107 participates in pyridoxal 5'-phosphate binding; that stretch reads GY. Position 131 (His-131) interacts with substrate. Residues Ser-177, 202-205, and 233-236 each bind pyridoxal 5'-phosphate; these read DDAH and TLSK. Lys-236 is subject to N6-(pyridoxal phosphate)lysine.

This sequence belongs to the class-II pyridoxal-phosphate-dependent aminotransferase family. BioF subfamily. Homodimer. The cofactor is pyridoxal 5'-phosphate.

The catalysed reaction is 6-carboxyhexanoyl-[ACP] + L-alanine + H(+) = (8S)-8-amino-7-oxononanoate + holo-[ACP] + CO2. The protein operates within cofactor biosynthesis; biotin biosynthesis. Functionally, catalyzes the decarboxylative condensation of pimeloyl-[acyl-carrier protein] and L-alanine to produce 8-amino-7-oxononanoate (AON), [acyl-carrier protein], and carbon dioxide. The protein is Putative 8-amino-7-oxononanoate synthase (bioF) of Desulforudis audaxviator (strain MP104C).